The primary structure comprises 156 residues: Arginine repressor (156 aa).

Belongs to the ArgR family.

The protein resides in the cytoplasm. The protein operates within amino-acid biosynthesis; L-arginine biosynthesis [regulation]. In terms of biological role, regulates arginine biosynthesis genes. The sequence is that of Arginine repressor from Escherichia coli O81 (strain ED1a).